We begin with the raw amino-acid sequence, 1590 residues long: Defective chorion protein, FC177 isoform (1590 aa).

The first 19 residues, 1–19, serve as a signal peptide directing secretion; sequence MRLFSLLPLLALLVVQAAG. Disordered regions lie at residues 23–60, 184–212, and 268–294; these read VTSD…PSIN, APAP…PDAP, and PAQP…EDPY. The segment covering 32 to 41 has biased composition (polar residues); that stretch reads AGSTTNSTTD. Low complexity predominate over residues 268–280; it reads PAQPAAAGTDAQA. 5 consecutive repeat copies span residues 493 to 518, 519 to 544, 545 to 570, 571 to 596, and 597 to 622. Residues 493–788 form a 12 X 26 AA approximate tandem repeats, Glu, Met-rich region; the sequence is QNPMMMQQRQ…IQQQQRQMMQ (296 aa). The stretch at 623-652 is one 6; approximate repeat; it reads QNPMMMQQRQWSEEQAKIQHDQQMAQQMAQ. Residues 653–680 form a 7; approximate repeat; sequence QGLMMTEQRQRQWSEDQAKIQQAQQMAQ. The stretch at 681–696 is one 8; approximate repeat; the sequence is QTPMMMPQMQQRQWTE. One copy of the 9; approximate repeat lies at 697 to 720; that stretch reads DPQMVQQMQQRQWAEDQTRMQMAQ. One copy of the 10; approximate repeat lies at 721 to 733; the sequence is QNPMMQQQRQMAE. The stretch at 734–758 is one 11; approximate repeat; sequence NPQMMQQRQWSEEQTKIEQAQQMAQ. The stretch at 759–788 is one 12; approximate repeat; the sequence is QNQMMMQQMQQRQWSEDQAQIQQQQRQMMQ. 6 disordered regions span residues 843–875, 944–983, 1119–1221, 1261–1352, 1375–1515, and 1538–1590; these read GPQM…SKSA, RTIN…EHRV, EEDA…TKSI, PVTE…DDNN, FAQG…QATV, and EKKS…QTKA. Residues 957–977 are compositionally biased toward polar residues; that stretch reads SESQKSNSNPPTTLTPAPQEQ. Positions 1119 to 1130 are enriched in acidic residues; it reads EEDAQQEPMEEE. The span at 1131-1148 shows a compositional bias: basic and acidic residues; sequence QLQHDPNTEPQYNHKDFV. Low complexity predominate over residues 1151-1195; that stretch reads TTSTASPITSTTEAATPTGSDSTSEATVTPEVTTTTSTSTTTTTE. The span at 1205-1221 shows a compositional bias: polar residues; it reads QQDSQAEAESSHVTKSI. Residues 1272–1288 are compositionally biased toward basic and acidic residues; sequence EPSKQEDKPKVEEKVIA. The segment covering 1295-1306 has biased composition (acidic residues); sequence EQEEELEEDEDS. 2 stretches are compositionally biased toward low complexity: residues 1307–1319 and 1435–1452; these read TSIS…PSPS and DSGS…TPSP. Basic residues predominate over residues 1493–1504; that stretch reads QRPKKSMSKPKK. Residues 1505–1515 are compositionally biased toward low complexity; the sequence is QSSQVTTQATV. Residues 1554–1576 are compositionally biased toward basic residues; sequence TKPKSIKPVKVIKRKRLRRRQHK. Residues 1577–1590 show a composition bias toward polar residues; that stretch reads SIATTIRSPIQTKA.

The protein localises to the secreted. Functionally, required for proper assembly of the eggshell. The chain is Defective chorion protein, FC177 isoform from Drosophila melanogaster (Fruit fly).